Consider the following 312-residue polypeptide: Ribosomal protein uL3 glutamine methyltransferase (312 aa).

Belongs to the protein N5-glutamine methyltransferase family. PrmB subfamily.

The enzyme catalyses L-glutaminyl-[ribosomal protein uL3] + S-adenosyl-L-methionine = N(5)-methyl-L-glutaminyl-[ribosomal protein uL3] + S-adenosyl-L-homocysteine + H(+). Its function is as follows. Methylates large ribosomal subunit protein uL3 on a specific glutamine residue. This is Ribosomal protein uL3 glutamine methyltransferase from Xylella fastidiosa (strain Temecula1 / ATCC 700964).